Reading from the N-terminus, the 169-residue chain is MASFQDRAQHTIAQLDKELSKYPVLNNLERQTSVPKVYVILGLVGIYTFLVFFNIAGEFLVNFAGFLIPGYYSLNALFTSGKADDTQWLTYWVVYALLTVVESAINAAYWFPFYYIFKFVLILWMSLPQTNGAQVVFHSFLQPVLGRFFTSGSTSANLRAQADAASKSQ.

Residues 1 to 35 (MASFQDRAQHTIAQLDKELSKYPVLNNLERQTSVP) are Cytoplasmic-facing. The chain crosses the membrane as a helical span at residues 36 to 55 (KVYVILGLVGIYTFLVFFNI). Residue Ala-56 is a topological domain, lumenal. A helical transmembrane segment spans residues 57 to 76 (GEFLVNFAGFLIPGYYSLNA). At 77–86 (LFTSGKADDT) the chain is on the cytoplasmic side. Residues 87–103 (QWLTYWVVYALLTVVES) traverse the membrane as a helical segment. Topologically, residues 104 to 105 (AI) are lumenal. A helical membrane pass occupies residues 106–124 (NAAYWFPFYYIFKFVLILW). Residues 125–169 (MSLPQTNGAQVVFHSFLQPVLGRFFTSGSTSANLRAQADAASKSQ) lie on the Cytoplasmic side of the membrane.

It belongs to the DP1 family. As to quaternary structure, oligomer.

It localises to the endoplasmic reticulum membrane. The protein resides in the golgi apparatus membrane. Functionally, required to generate and maintain the structure of the tubular endoplasmic reticulum network and the vacuole. Induces high curvature in membranes and causes membrane tubule formation. Involved in membrane/vesicle trafficking. The protein is Protein yop1 (yop1) of Aspergillus fumigatus (strain ATCC MYA-4609 / CBS 101355 / FGSC A1100 / Af293) (Neosartorya fumigata).